The following is a 209-amino-acid chain: Kynurenine formamidase (209 aa).

W20 contributes to the substrate binding site. Residues H50, H54, and D56 each contribute to the Zn(2+) site. Catalysis depends on H60, which acts as the Proton donor/acceptor. 2 residues coordinate Zn(2+): H161 and E173.

It belongs to the Cyclase 1 superfamily. KynB family. In terms of assembly, homodimer. Zn(2+) is required as a cofactor.

It carries out the reaction N-formyl-L-kynurenine + H2O = L-kynurenine + formate + H(+). It participates in amino-acid degradation; L-tryptophan degradation via kynurenine pathway; L-kynurenine from L-tryptophan: step 2/2. Its function is as follows. Catalyzes the hydrolysis of N-formyl-L-kynurenine to L-kynurenine, the second step in the kynurenine pathway of tryptophan degradation. This Bacillus thuringiensis (strain Al Hakam) protein is Kynurenine formamidase.